The sequence spans 173 residues: Crossover junction endodeoxyribonuclease RuvC (173 aa).

Active-site residues include aspartate 8, glutamate 67, and aspartate 139. Mg(2+)-binding residues include aspartate 8, glutamate 67, and aspartate 139.

Belongs to the RuvC family. Homodimer which binds Holliday junction (HJ) DNA. The HJ becomes 2-fold symmetrical on binding to RuvC with unstacked arms; it has a different conformation from HJ DNA in complex with RuvA. In the full resolvosome a probable DNA-RuvA(4)-RuvB(12)-RuvC(2) complex forms which resolves the HJ. Requires Mg(2+) as cofactor.

The protein resides in the cytoplasm. The catalysed reaction is Endonucleolytic cleavage at a junction such as a reciprocal single-stranded crossover between two homologous DNA duplexes (Holliday junction).. Its function is as follows. The RuvA-RuvB-RuvC complex processes Holliday junction (HJ) DNA during genetic recombination and DNA repair. Endonuclease that resolves HJ intermediates. Cleaves cruciform DNA by making single-stranded nicks across the HJ at symmetrical positions within the homologous arms, yielding a 5'-phosphate and a 3'-hydroxyl group; requires a central core of homology in the junction. The consensus cleavage sequence is 5'-(A/T)TT(C/G)-3'. Cleavage occurs on the 3'-side of the TT dinucleotide at the point of strand exchange. HJ branch migration catalyzed by RuvA-RuvB allows RuvC to scan DNA until it finds its consensus sequence, where it cleaves and resolves the cruciform DNA. This is Crossover junction endodeoxyribonuclease RuvC from Serratia proteamaculans (strain 568).